The primary structure comprises 166 residues: uncharacterized protein (166 aa).

Gly residues-rich tracts occupy residues 1–10 and 76–86; these read MNYGNNGGGQ and YRGGGGGGGGN. The interval 1 to 117 is disordered; the sequence is MNYGNNGGGQ…GGGNKNFGPI (117 aa).

This is an uncharacterized protein from Caenorhabditis elegans.